The following is a 172-amino-acid chain: NADH-quinone oxidoreductase subunit B 1 (172 aa).

[4Fe-4S] cluster-binding residues include Cys-42, Cys-43, Cys-107, and Cys-137.

This sequence belongs to the complex I 20 kDa subunit family. NDH-1 is composed of 14 different subunits. Subunits NuoB, C, D, E, F, and G constitute the peripheral sector of the complex. [4Fe-4S] cluster serves as cofactor.

The protein resides in the cell inner membrane. It catalyses the reaction a quinone + NADH + 5 H(+)(in) = a quinol + NAD(+) + 4 H(+)(out). In terms of biological role, NDH-1 shuttles electrons from NADH, via FMN and iron-sulfur (Fe-S) centers, to quinones in the respiratory chain. Couples the redox reaction to proton translocation (for every two electrons transferred, four hydrogen ions are translocated across the cytoplasmic membrane), and thus conserves the redox energy in a proton gradient. This chain is NADH-quinone oxidoreductase subunit B 1, found in Anaeromyxobacter sp. (strain Fw109-5).